The sequence spans 557 residues: 2-isopropylmalate synthase (557 aa).

The Pyruvate carboxyltransferase domain maps to P31–L304. Positions 40, 243, 245, and 279 each coordinate Mg(2+). The regulatory domain stretch occupies residues I439–V557.

This sequence belongs to the alpha-IPM synthase/homocitrate synthase family. LeuA type 2 subfamily. Homodimer. Mg(2+) is required as a cofactor.

The protein resides in the cytoplasm. The catalysed reaction is 3-methyl-2-oxobutanoate + acetyl-CoA + H2O = (2S)-2-isopropylmalate + CoA + H(+). Its pathway is amino-acid biosynthesis; L-leucine biosynthesis; L-leucine from 3-methyl-2-oxobutanoate: step 1/4. Its function is as follows. Catalyzes the condensation of the acetyl group of acetyl-CoA with 3-methyl-2-oxobutanoate (2-ketoisovalerate) to form 3-carboxy-3-hydroxy-4-methylpentanoate (2-isopropylmalate). The protein is 2-isopropylmalate synthase of Desulfitobacterium hafniense (strain Y51).